The primary structure comprises 189 residues: Large ribosomal subunit protein uL5 (189 aa).

This sequence belongs to the universal ribosomal protein uL5 family. Part of the 50S ribosomal subunit; part of the 5S rRNA/L5/L18/L25 subcomplex. Contacts the 5S rRNA and the P site tRNA. Forms a bridge to the 30S subunit in the 70S ribosome.

Its function is as follows. This is one of the proteins that bind and probably mediate the attachment of the 5S RNA into the large ribosomal subunit, where it forms part of the central protuberance. In the 70S ribosome it contacts protein S13 of the 30S subunit (bridge B1b), connecting the 2 subunits; this bridge is implicated in subunit movement. Contacts the P site tRNA; the 5S rRNA and some of its associated proteins might help stabilize positioning of ribosome-bound tRNAs. The protein is Large ribosomal subunit protein uL5 of Corynebacterium jeikeium (strain K411).